Here is a 258-residue protein sequence, read N- to C-terminus: Pimeloyl-[acyl-carrier protein] methyl ester esterase (258 aa).

The AB hydrolase-1 domain occupies 16–242 (LVLLHGWGLN…AAHAPFISHP (227 aa)). Residues tryptophan 22, 82 to 83 (SM), and 143 to 147 (FLALQ) each bind substrate. Serine 82 functions as the Nucleophile in the catalytic mechanism. Catalysis depends on residues aspartate 207 and histidine 235. Histidine 235 provides a ligand contact to substrate.

This sequence belongs to the AB hydrolase superfamily. Carboxylesterase BioH family. In terms of assembly, monomer.

It localises to the cytoplasm. It carries out the reaction 6-carboxyhexanoyl-[ACP] methyl ester + H2O = 6-carboxyhexanoyl-[ACP] + methanol + H(+). Its pathway is cofactor biosynthesis; biotin biosynthesis. The physiological role of BioH is to remove the methyl group introduced by BioC when the pimeloyl moiety is complete. It allows to synthesize pimeloyl-ACP via the fatty acid synthetic pathway through the hydrolysis of the ester bonds of pimeloyl-ACP esters. The chain is Pimeloyl-[acyl-carrier protein] methyl ester esterase from Yersinia pseudotuberculosis serotype IB (strain PB1/+).